A 447-amino-acid chain; its full sequence is Phosphatidylinositol 4-kinase type 2-alpha (447 aa).

The interval 1–77 (MDETSPLVSP…HRNEFPEDPE (77 aa)) is disordered. Positions 48 to 77 (RSRERQPLLDRDRGASPRDPHRNEFPEDPE) are enriched in basic and acidic residues. The 330-residue stretch at 92–421 (GIYPERIYQG…VQMPPVIVET (330 aa)) folds into the PI3K/PI4K catalytic domain. The interval 98–104 (IYQGSSG) is G-loop. Residues 99–105 (YQGSSGS) and K120 contribute to the ATP site. The important for substrate binding stretch occupies residues 125–127 (EPY). An important for interaction with membranes region spans residues 133–146 (KWTKWLQKLCCPCC). Residues C142, C143, C145, and C146 are each lipidated (S-palmitoyl cysteine). ATP is bound at residue 229–232 (QIFV). Positions 236–244 (KDADFWLRR) are important for interaction with membranes. A catalytic loop region spans residues 273–281 (RNTDRGNDN). The segment at 312-332 (AIDNGLAFPLKHPDSWRAYPF) is activation loop. An ATP-binding site is contributed by D314. An important for interaction with membranes region spans residues 327–336 (WRAYPFYWAW).

Belongs to the PI3/PI4-kinase family. Type II PI4K subfamily.

It is found in the golgi apparatus. It localises to the trans-Golgi network membrane. Its subcellular location is the membrane raft. The protein resides in the endosome. The protein localises to the cytoplasmic vesicle. It is found in the cell projection. It localises to the dendrite. Its subcellular location is the presynaptic cell membrane. The protein resides in the synapse. The protein localises to the synaptosome. It is found in the mitochondrion. It localises to the membrane. Its subcellular location is the cell membrane. The protein resides in the perikaryon. The protein localises to the neuron projection. The catalysed reaction is a 1,2-diacyl-sn-glycero-3-phospho-(1D-myo-inositol) + ATP = a 1,2-diacyl-sn-glycero-3-phospho-(1D-myo-inositol 4-phosphate) + ADP + H(+). Its function is as follows. Membrane-bound phosphatidylinositol-4 kinase (PI4-kinase) that catalyzes the phosphorylation of phosphatidylinositol (PI) to phosphatidylinositol 4-phosphate (PI4P), a lipid that plays important roles in endocytosis, Golgi function, protein sorting and membrane trafficking. Besides, phosphorylation of phosphatidylinositol (PI) to phosphatidylinositol 4-phosphate (PI4P) is the first committed step in the generation of phosphatidylinositol 4,5-bisphosphate (PIP2), a precursor of the second messenger inositol 1,4,5-trisphosphate (InsP3). This chain is Phosphatidylinositol 4-kinase type 2-alpha (pi4k2a), found in Danio rerio (Zebrafish).